Reading from the N-terminus, the 505-residue chain is Flagellin (505 aa).

Belongs to the bacterial flagellin family.

The protein resides in the secreted. Its subcellular location is the bacterial flagellum. Its function is as follows. Flagellin is the subunit protein which polymerizes to form the filaments of bacterial flagella. The sequence is that of Flagellin (fliC) from Salmonella enteritidis.